Here is a 384-residue protein sequence, read N- to C-terminus: S-adenosylmethionine synthase (384 aa).

Residue His16 coordinates ATP. Asp18 is a Mg(2+) binding site. Glu44 contributes to the K(+) binding site. 2 residues coordinate L-methionine: Glu57 and Gln100. A flexible loop region spans residues 100-110 (QSADIAMGVDE). ATP is bound by residues 165–167 (DAK), Asp240, 246–247 (RK), Ala263, and Lys267. Asp240 lines the L-methionine pocket. Lys271 serves as a coordination point for L-methionine.

The protein belongs to the AdoMet synthase family. Homotetramer; dimer of dimers. Mg(2+) serves as cofactor. It depends on K(+) as a cofactor.

It localises to the cytoplasm. The catalysed reaction is L-methionine + ATP + H2O = S-adenosyl-L-methionine + phosphate + diphosphate. The protein operates within amino-acid biosynthesis; S-adenosyl-L-methionine biosynthesis; S-adenosyl-L-methionine from L-methionine: step 1/1. In terms of biological role, catalyzes the formation of S-adenosylmethionine (AdoMet) from methionine and ATP. The overall synthetic reaction is composed of two sequential steps, AdoMet formation and the subsequent tripolyphosphate hydrolysis which occurs prior to release of AdoMet from the enzyme. The chain is S-adenosylmethionine synthase from Teredinibacter turnerae (strain ATCC 39867 / T7901).